Reading from the N-terminus, the 175-residue chain is Ribosome maturation factor RimM (175 aa).

The region spanning 96 to 175 (DGDYYWKDLI…IIKVDWDPEF (80 aa)) is the PRC barrel domain.

It belongs to the RimM family. As to quaternary structure, binds ribosomal protein uS19.

The protein resides in the cytoplasm. Its function is as follows. An accessory protein needed during the final step in the assembly of 30S ribosomal subunit, possibly for assembly of the head region. Essential for efficient processing of 16S rRNA. May be needed both before and after RbfA during the maturation of 16S rRNA. It has affinity for free ribosomal 30S subunits but not for 70S ribosomes. This is Ribosome maturation factor RimM from Baumannia cicadellinicola subsp. Homalodisca coagulata.